A 347-amino-acid polypeptide reads, in one-letter code: Protein RecA (347 aa).

Glycine 68–threonine 75 contacts ATP.

The protein belongs to the RecA family.

It is found in the cytoplasm. In terms of biological role, can catalyze the hydrolysis of ATP in the presence of single-stranded DNA, the ATP-dependent uptake of single-stranded DNA by duplex DNA, and the ATP-dependent hybridization of homologous single-stranded DNAs. It interacts with LexA causing its activation and leading to its autocatalytic cleavage. This Nocardia farcinica (strain IFM 10152) protein is Protein RecA.